The sequence spans 306 residues: Ornithine carbamoyltransferase (306 aa).

Carbamoyl phosphate contacts are provided by residues 51–54 (STRT), Q78, R102, and 129–132 (HPVQ). L-ornithine is bound by residues N159, D223, and 227 to 228 (SM). Carbamoyl phosphate contacts are provided by residues 263 to 264 (CL) and R291.

It belongs to the aspartate/ornithine carbamoyltransferase superfamily. OTCase family.

It is found in the cytoplasm. It carries out the reaction carbamoyl phosphate + L-ornithine = L-citrulline + phosphate + H(+). Its pathway is amino-acid biosynthesis; L-arginine biosynthesis; L-arginine from L-ornithine and carbamoyl phosphate: step 1/3. In terms of biological role, reversibly catalyzes the transfer of the carbamoyl group from carbamoyl phosphate (CP) to the N(epsilon) atom of ornithine (ORN) to produce L-citrulline. The chain is Ornithine carbamoyltransferase from Sulfurovum sp. (strain NBC37-1).